The primary structure comprises 207 residues: LexA repressor (207 aa).

The segment at residues 28 to 47 (VREIARRFRITPRGAQLHLV) is a DNA-binding region (H-T-H motif). Residues Ser119 and Lys156 each act as for autocatalytic cleavage activity in the active site.

Belongs to the peptidase S24 family. Homodimer.

The enzyme catalyses Hydrolysis of Ala-|-Gly bond in repressor LexA.. Represses a number of genes involved in the response to DNA damage (SOS response), including recA and lexA. In the presence of single-stranded DNA, RecA interacts with LexA causing an autocatalytic cleavage which disrupts the DNA-binding part of LexA, leading to derepression of the SOS regulon and eventually DNA repair. This is LexA repressor from Thermotoga neapolitana (strain ATCC 49049 / DSM 4359 / NBRC 107923 / NS-E).